The sequence spans 470 residues: Beta-Ala-Xaa dipeptidase (470 aa).

A Zn(2+)-binding site is contributed by histidine 87. The active site involves aspartate 89. Aspartate 119 serves as a coordination point for Zn(2+). Catalysis depends on glutamate 153, which acts as the Proton acceptor. Zn(2+) is bound by residues glutamate 154 and aspartate 177. Residue arginine 350 coordinates substrate. Residue histidine 439 participates in Zn(2+) binding.

Belongs to the peptidase M20A family. It depends on Zn(2+) as a cofactor.

The protein resides in the cytoplasm. With respect to regulation, fully inhibited by 1,10-phenanthroline or EDTA. Is a relatively unspecific dipeptidase cleaving a variety of dipeptides, notably those with an N-terminal beta-Ala or D-Ala residue, e.g. carnosine (beta-Ala-His). To a lesser extent, also shows aminopeptidase activity, since it is able to catalyze the removal of the N-terminal amino acid from a few distinct tripeptides. This is Beta-Ala-Xaa dipeptidase (pepV) from Lactobacillus delbrueckii subsp. lactis.